Reading from the N-terminus, the 245-residue chain is Octopine transport system permease protein OccM (245 aa).

5 consecutive transmembrane segments (helical) span residues Phe-12–Val-32, Phe-57–Gly-77, Ala-96–Met-116, Val-163–Ile-183, and Ala-199–Ile-219. In terms of domain architecture, ABC transmembrane type-1 spans Ile-19–Phe-216.

The protein belongs to the binding-protein-dependent transport system permease family. HisMQ subfamily.

The protein resides in the cell inner membrane. Its function is as follows. Component of the octopine active transport system probably consisting of four subunits: Q, M, P and T. This chain is Octopine transport system permease protein OccM (occM), found in Rhizobium meliloti (Ensifer meliloti).